We begin with the raw amino-acid sequence, 370 residues long: 3-dehydroquinate synthase (370 aa).

NAD(+) contacts are provided by residues 112 to 116, 136 to 137, Lys-149, Lys-158, and 176 to 179; these read GVVGD, TS, and TLRT. 3 residues coordinate Zn(2+): Glu-191, His-254, and His-276.

Belongs to the sugar phosphate cyclases superfamily. Dehydroquinate synthase family. The cofactor is Co(2+). Zn(2+) serves as cofactor. NAD(+) is required as a cofactor.

Its subcellular location is the cytoplasm. The catalysed reaction is 7-phospho-2-dehydro-3-deoxy-D-arabino-heptonate = 3-dehydroquinate + phosphate. Its pathway is metabolic intermediate biosynthesis; chorismate biosynthesis; chorismate from D-erythrose 4-phosphate and phosphoenolpyruvate: step 2/7. In terms of biological role, catalyzes the conversion of 3-deoxy-D-arabino-heptulosonate 7-phosphate (DAHP) to dehydroquinate (DHQ). The chain is 3-dehydroquinate synthase from Xanthomonas oryzae pv. oryzae (strain PXO99A).